The chain runs to 379 residues: Protein hairy (379 aa).

The interval Ser-20 to Arg-50 is disordered. Residues Gln-29 to Glu-47 are compositionally biased toward basic and acidic residues. An interaction with Topors region spans residues Lys-36–Asn-55. One can recognise a bHLH domain in the interval Asp-38–Leu-95. One can recognise an Orange domain in the interval Phe-114–Leu-143. Disordered stretches follow at residues Gln-167–Ala-208 and Gln-298–Ser-345. Low complexity-rich tracts occupy residues Pro-182–Thr-207 and Ala-301–Ala-328. The WRPW motif motif lies at Trp-376 to Trp-379.

In terms of assembly, transcription repression requires formation of a complex with a corepressor protein (Groucho).

It localises to the nucleus. In terms of biological role, pair-rule protein that regulates embryonic segmentation and adult bristle patterning. Transcriptional repressor of genes that require a bHLH protein for their transcription (e.g. ftz). The sequence is that of Protein hairy from Drosophila virilis (Fruit fly).